Consider the following 206-residue polypeptide: dTTP/UTP pyrophosphatase (206 aa).

Catalysis depends on Asp79, which acts as the Proton acceptor.

Belongs to the Maf family. YhdE subfamily. The cofactor is a divalent metal cation.

It localises to the cytoplasm. It catalyses the reaction dTTP + H2O = dTMP + diphosphate + H(+). It carries out the reaction UTP + H2O = UMP + diphosphate + H(+). Its function is as follows. Nucleoside triphosphate pyrophosphatase that hydrolyzes dTTP and UTP. May have a dual role in cell division arrest and in preventing the incorporation of modified nucleotides into cellular nucleic acids. The protein is dTTP/UTP pyrophosphatase of Rhizobium etli (strain ATCC 51251 / DSM 11541 / JCM 21823 / NBRC 15573 / CFN 42).